Reading from the N-terminus, the 3230-residue chain is MQSSPSPAHPQLPVLQTQMVSDGMTGSNPVSPASSSSPASSGAGGISPQHIAQDSSLDGPPGPPDGATVPLEGFSLSQAADLANKGPKWEKSHAEIAEQAKHEAEIETRIAELRKEGFWSLKRLPKVPEPPRPKGHWDYLCEEMQWLSADFAQERRWKRGVARKVVRMVIRHHEEQRQKEERARREEQAKLRRIASTMAKDVRQFWSNVEKVVQFKQQSRLEEKRKKALDLHLDFIVGQTEKYSDLLSQSLNQPLTSSKAGSSPCLGSSSAASSPPPPASRLDDEDGDFQPQEDEEEDDEETIEVEEQQEGNDAEAQRREIELLRREGELPLEELLRSLPPQLLEGPSSPSQTPSSHDSDTRDGPEEGAEEEPPQVLEIKPPPSAVTQRNKQPWHPDEDDEEFTANEEEAEDEEDTIAAEEQLEGEVDHAMELSELAREGELSMEELLQQYAGAYAPGSGSSEDEDEDEVDANSSDCEPEGPVEAEEPPQEDSSSQSDSVEDRSEDEEDEHSEEEETSGSSASEESESEESEDAQSQSQADEEEEDDDFGVEYLLARDEEQSEADAGSGPPTPGPTTLGPKKEITDIAAAAESLQPKGYTLATTQVKTPIPLLLRGQLREYQHIGLDWLVTMYEKKLNGILADEMGLGKTIQTISLLAHLACEKGNWGPHLIIVPTSVMLNWEMELKRWCPSFKILTYYGAQKERKLKRQGWTKPNAFHVCITSYKLVLQDHQAFRRKNWRYLILDEAQNIKNFKSQRWQSLLNFNSQRRLLLTGTPLQNSLMELWSLMHFLMPHVFQSHREFKEWFSNPLTGMIEGSQEYNEGLVKRLHKVLRPFLLRRVKVDVEKQMPKKYEHVIRCRLSKRQRCLYDDFMAQTTTKETLATGHFMSVINILMQLRKVCNHPNLFDPRPVTSPFITPGICFSTASLVLRATDVHPLQRIDMGRFDLIGLEGRVSRYEADTFLPRHRLSRRVLLEVATAPDPPPRPKPVKMKVNRMLQPVPKQEGRTVVVVNNPRAPLGPVPVRPPPGPELSAQPTPGPVPQVLPASLMVSASPAGPPLIPASRPPGPVLLPPLQPNSGSLPQVLPSPLGVLSGTSRPPTPTLSLKPTPPAPVRLSPAPPPGSSSLLKPLTVPPGYTFPPAAATTTSTTTATATTTAVPAPTPAPQRLILSPDMQARLPSGEVVSIGQLASLAQRPVANAGGSKPLTFQIQGNKLTLTGAQVRQLAVGQPRPLQRNVVHLVSAGGQHHLISQPAHVALIQAVAPTPGPTPVSVLPSSTPSTTPAPTGLSLPLAANQVPPTMVNNTGVVKIVVRQAPRDGLTPVPPLAPAPRPPSSGLPAVLNPRPTLTPGRLPTPTLGTARAPMPTPTLVRPLLKLVHSPSPEVSASAPGAAPLTISSPLHVPSSLPGPASSPMPIPNSSPLASPVSSTVSVPLSSSLPISVPTTLPAPASAPLTIPISAPLTVSASGPALLTSVTPPLAPVVPAAPGPPSLAPSGASPSASALTLGLATAPSLSSSQTPGHPLLLAPTSSHVPGLNSTVAPACSPVLVPASALASPFPSAPNPAPAQASLLAPASSASQALATPLAPMAAPQTAILAPSPAPPLAPLPVLAPSPGAAPVLASSQTPVPVMAPSSTPGTSLASASPVPAPTPVLAPSSTQTMLPAPVPSPLPSPASTQTLALAPALAPTLGGSSPSQTLSLGTGNPQGPFPTQTLSLTPASSLVPTPAQTLSLAPGPPLGPTQTLSLAPAPPLAPASPVGPAPAHTLTLAPASSSASLLAPASVQTLTLSPAPVPTLGPAAAQTLALAPASTQSPASQASSLVVSASGAAPLPVTMVSRLPVSKDEPDTLTLRSGPPSPPSTATSFGGPRPRRQPPPPPRSPFYLDSLEEKRKRQRSERLERIFQLSEAHGALAPVYGTEVLDFCTLPQPVASPIGPRSPGPSHPTFWTYTEAAHRAVLFPQQRLDQLSEIIERFIFVMPPVEAPPPSLHACHPPPWLAPRQAAFQEQLASELWPRARPLHRIVCNMRTQFPDLRLIQYDCGKLQTLAVLLRQLKAEGHRVLIFTQMTRMLDVLEQFLTYHGHLYLRLDGSTRVEQRQALMERFNADKRIFCFILSTRSGGVGVNLTGADTVVFYDSDWNPTMDAQAQDRCHRIGQTRDVHIYRLISERTVEENILKKANQKRMLGDMAIEGGNFTTAYFKQQTIRELFDMPLEEPSSSSVPSAPEEEEETVASKQTHILEQALCRAEDEEDIRAATQAKAEQVAELAEFNENDGFPAGEGEEAGRPGAEDEEMSRAEQEIAALVEQLTPIERYAMKFLEASLEEVSREELKQAEEQVEAARKDLDQAKEEVFRLPQEEEEGPGAGDESSCGTGGGTHRRSKKAKAPERPGTRVSERLRGARAETQGANHTPVISAHQTRSTTTPPRCSPARERVPRPAPRPRPTPASAPAAIPALVPVPVSAPVPISAPNPITILPVHILPSPPPPSQIPPCSSPACTPPPACTPPPAHTPPPAQTCLVTPSSPLLLGPPSVPISASVTNLPLGLRPEAELCAQALASPESLELASVASSETSSLSLVPPKDLLPVAVEILPVSEKNLSLTPSAPSLTLEAGSIPNGQEQEAPDSAEGTTLTVLPEGEELPLCVSESNGLELPPSAASDEPLQEPLEADRTSEELTEAKTPTSSPEKPQELVTAEVAAPSTSSSATSSPEGPSPARPPRRRTSADVEIRGQGTGRPGQPPGPKVLRKLPGRLVTVVEEKELVRRRRQQRGAASTLVPGVSETSASPGSPSVRSMSGPESSPPIGGPCEAAPSSSLPTPPQQPFIARRHIELGVTGGGSPENGDGALLAITPPAVKRRRGRPPKKNRSPADAGRGVDEAPSSTLKGKTNGADPVPGPETLIVADPVLEPQLIPGPQPLGPQPVHRPNPLLSPVEKRRRGRPPKARDLPIPGTISSAGDGNSESRTQPPPHPSPLTPLPPLLVCPTATVANTVTTVTISTSPPKRKRGRPPKNPPSPRPSQLPVLDRDSTSVLESCGLGRRRQPQGQGESEGSSSDEDGSRPLTRLARLRLEAEGMRGRKSGGSMVVAVIQDDLDLADSGPGGLELTPPVVSLTPKLRSTRLRPGSLVPPLETEKLPRKRAGAPVGGSPGLAKRGRLQPPSPLGPEGSVEESEAEASGEEEEGDGTPRRRPGPRRLVGTTNQGDQRILRSSAPPSLAGPAVSHRGRKAKT.

The segment at 1 to 71 (MQSSPSPAHP…GPPDGATVPL (71 aa)) is disordered. Over residues 26-41 (GSNPVSPASSSSPASS) the composition is skewed to low complexity. One can recognise an HSA domain in the interval 124 to 196 (LPKVPEPPRP…EQAKLRRIAS (73 aa)). Disordered stretches follow at residues 253–547 (QPLT…EEDD) and 559–581 (EEQS…LGPK). Residues 257 to 273 (SSKAGSSPCLGSSSAAS) show a composition bias toward low complexity. Positions 283-313 (DDEDGDFQPQEDEEEDDEETIEVEEQQEGND) are enriched in acidic residues. The span at 315-329 (EAQRREIELLRREGE) shows a compositional bias: basic and acidic residues. The segment covering 337–356 (RSLPPQLLEGPSSPSQTPSS) has biased composition (low complexity). The segment covering 397–425 (DEDDEEFTANEEEAEDEEDTIAAEEQLEG) has biased composition (acidic residues). Basic and acidic residues predominate over residues 426–441 (EVDHAMELSELAREGE). Composition is skewed to acidic residues over residues 462–490 (SEDE…EPPQ), 503–517 (RSED…EEET), and 524–533 (EESESEESED). The Helicase ATP-binding domain occupies 630-795 (VTMYEKKLNG…WSLMHFLMPH (166 aa)). 643-650 (DEMGLGKT) contacts ATP. 3 disordered regions span residues 1017–1045 (APLG…PQVL), 1058–1125 (PPLI…PGSS), and 1138–1166 (TFPP…TPAP). 2 stretches are compositionally biased toward pro residues: residues 1018-1030 (PLGP…PPGP) and 1058-1076 (PPLI…PPLQ). Low complexity predominate over residues 1093-1107 (LSGTSRPPTPTLSLK). Over residues 1108–1123 (PTPPAPVRLSPAPPPG) the composition is skewed to pro residues. Residues 1138 to 1160 (TFPPAAATTTSTTTATATTTAVP) are compositionally biased toward low complexity. A Phosphoserine modification is found at Ser1172. Disordered stretches follow at residues 1320–1366 (GLTP…APMP), 1406–1425 (SLPG…PLAS), 1629–1760 (VPVM…ASPV), and 1839–1893 (SRLP…EEKR). Pro residues predominate over residues 1323–1336 (PVPPLAPAPRPPSS). A compositionally biased stretch (low complexity) spans 1337–1360 (GLPAVLNPRPTLTPGRLPTPTLGT). Residues 1675 to 1691 (PASTQTLALAPALAPTL) show a composition bias toward low complexity. Positions 1692–1733 (GGSSPSQTLSLGTGNPQGPFPTQTLSLTPASSLVPTPAQTLS) are enriched in polar residues. Positions 1750 to 1760 (PAPPLAPASPV) are enriched in pro residues. Positions 2044–2197 (KLQTLAVLLR…DMAIEGGNFT (154 aa)) constitute a Helicase C-terminal domain. Disordered regions lie at residues 2214 to 2233 (LEEP…EETV), 2271 to 2298 (FNEN…MSRA), 2327 to 2453 (VSRE…APAA), 2564 to 2583 (LELA…VPPK), 2598 to 3081 (KNLS…GRKS), and 3095 to 3230 (DLAD…KAKT). A compositionally biased stretch (low complexity) spans 2215-2225 (EEPSSSSVPSA). 3 stretches are compositionally biased toward basic and acidic residues: residues 2284-2298 (EAGR…MSRA), 2327-2358 (VSRE…RLPQ), and 2386-2403 (KAPE…RGAR). Residues 2438–2448 (RPAPRPRPTPA) are compositionally biased toward pro residues. Composition is skewed to low complexity over residues 2564–2579 (LELA…SLSL) and 2600–2611 (LSLTPSAPSLTL). The segment covering 2669–2679 (EADRTSEELTE) has biased composition (basic and acidic residues). Residues 2694 to 2712 (VTAEVAAPSTSSSATSSPE) show a composition bias toward low complexity. Polar residues predominate over residues 2782–2794 (SETSASPGSPSVR). Low complexity predominate over residues 2807–2817 (GPCEAAPSSSL). Positions 2856 to 2868 (VKRRRGRPPKKNR) are enriched in basic residues. Positions 2857 to 2869 (KRRRGRPPKKNRS) form a DNA-binding region, a.T hook 1. Positions 2913–2926 (IPGPQPLGPQPVHR) are enriched in pro residues. Positions 2936–2948 (KRRRGRPPKARDL) form a DNA-binding region, a.T hook 2. Residues 2953-2965 (TISSAGDGNSESR) are compositionally biased toward polar residues. A compositionally biased stretch (pro residues) spans 2967 to 2982 (QPPPHPSPLTPLPPLL). The span at 2983–3002 (VCPTATVANTVTTVTISTSP) shows a compositional bias: low complexity. A DNA-binding region (a.T hook 3) is located at residues 3004–3016 (KRKRGRPPKNPPS). Residues 3011–3020 (PKNPPSPRPS) show a composition bias toward pro residues. The span at 3044–3053 (PQGQGESEGS) shows a compositional bias: low complexity. Over residues 3168 to 3184 (SVEESEAEASGEEEEGD) the composition is skewed to acidic residues.

It belongs to the SNF2/RAD54 helicase family. SWR1 subfamily. In terms of assembly, interacts with CREBBP and EP300. May be part of a complex containing SRCAP, CREBBP, CARM1 and GRIP1. Component of the chromatin-remodeling SRCAP complex composed of at least SRCAP, DMAP1, RUVBL1, RUVBL2, ACTL6A, YEATS4, VPS72, ACTR6 and ZNHIT1. Component of a NuA4-related complex which contains EP400, TRRAP/PAF400, SRCAP, BRD8/SMAP, EPC1, DMAP1/DNMAP1, RUVBL1/TIP49, RUVBL2, actin, ACTL6A/BAF53A, VPS72 and YEATS4/GAS41. As to quaternary structure, (Microbial infection) Interacts with hepatitis C virus (HCV) NS5A. (Microbial infection) Interacts with human adenovirus 2 DBP.

It is found in the nucleus. Catalytic component of the SRCAP complex which mediates the ATP-dependent exchange of histone H2AZ/H2B dimers for nucleosomal H2A/H2B, leading to transcriptional regulation of selected genes by chromatin remodeling. Acts as a coactivator for CREB-mediated transcription, steroid receptor-mediated transcription, and Notch-mediated transcription. The protein is Helicase SRCAP (SRCAP) of Homo sapiens (Human).